Consider the following 137-residue polypeptide: Peptide methionine sulfoxide reductase MsrB (137 aa).

The 123-residue stretch at 7-129 folds into the MsrB domain; the sequence is AEELKKNLSE…NSASLRFTDG (123 aa). Zn(2+) contacts are provided by Cys46, Cys49, Cys95, and Cys98. Cys118 acts as the Nucleophile in catalysis.

Belongs to the MsrB Met sulfoxide reductase family. Zn(2+) is required as a cofactor.

It carries out the reaction L-methionyl-[protein] + [thioredoxin]-disulfide + H2O = L-methionyl-(R)-S-oxide-[protein] + [thioredoxin]-dithiol. The protein is Peptide methionine sulfoxide reductase MsrB of Escherichia coli O45:K1 (strain S88 / ExPEC).